A 222-amino-acid polypeptide reads, in one-letter code: CCA-adding enzyme (222 aa).

Positions 50 and 53 each coordinate ATP. The CTP site is built by S50 and K53. Mg(2+) is bound by residues D61, D63, and D112. 3 residues coordinate ATP: H135, K155, and Y164. CTP-binding residues include H135, K155, and Y164.

This sequence belongs to the tRNA nucleotidyltransferase/poly(A) polymerase family. Archaeal CCA-adding enzyme subfamily. As to quaternary structure, homodimer. The cofactor is Mg(2+).

The catalysed reaction is a tRNA precursor + 2 CTP + ATP = a tRNA with a 3' CCA end + 3 diphosphate. It catalyses the reaction a tRNA with a 3' CCA end + 2 CTP + ATP = a tRNA with a 3' CCACCA end + 3 diphosphate. Its function is as follows. Catalyzes the addition and repair of the essential 3'-terminal CCA sequence in tRNAs without using a nucleic acid template. Adds these three nucleotides in the order of C, C, and A to the tRNA nucleotide-73, using CTP and ATP as substrates and producing inorganic pyrophosphate. tRNA 3'-terminal CCA addition is required both for tRNA processing and repair. Also involved in tRNA surveillance by mediating tandem CCA addition to generate a CCACCA at the 3' terminus of unstable tRNAs. While stable tRNAs receive only 3'-terminal CCA, unstable tRNAs are marked with CCACCA and rapidly degraded. The sequence is that of CCA-adding enzyme from Thermoplasma acidophilum.